Reading from the N-terminus, the 363-residue chain is Glutamate 5-kinase (363 aa).

Residue Lys6 participates in ATP binding. Substrate contacts are provided by Ser46, Asp133, and Asn145. Residues 165 to 166 (TD) and 207 to 213 (TGGMHTK) each bind ATP. In terms of domain architecture, PUA spans 271–349 (TGRLLLDEGA…RDIEAVLGFT (79 aa)).

It belongs to the glutamate 5-kinase family.

It is found in the cytoplasm. The enzyme catalyses L-glutamate + ATP = L-glutamyl 5-phosphate + ADP. The protein operates within amino-acid biosynthesis; L-proline biosynthesis; L-glutamate 5-semialdehyde from L-glutamate: step 1/2. Catalyzes the transfer of a phosphate group to glutamate to form L-glutamate 5-phosphate. The sequence is that of Glutamate 5-kinase from Deinococcus geothermalis (strain DSM 11300 / CIP 105573 / AG-3a).